Consider the following 773-residue polypeptide: Acyl-homoserine lactone acylase PvdQ (773 aa).

A signal peptide spans methionine 1 to alanine 23. Positions serine 200–glycine 221 are cleaved as a propeptide — spacer peptide. Catalysis depends on serine 222, which acts as the Nucleophile.

This sequence belongs to the peptidase S45 family. As to quaternary structure, heterodimer of an alpha subunit and a beta subunit processed from the same precursor.

Its subcellular location is the periplasm. The enzyme catalyses an N-acyl-L-homoserine lactone + H2O = L-homoserine lactone + a carboxylate. Its function is as follows. Catalyzes the deacylation of acyl-homoserine lactone (AHL or acyl-HSL), releasing homoserine lactone (HSL) and the corresponding fatty acid. Possesses a specificity for the degradation of long-chain acyl-HSLs (side chains of 11 to 14 carbons in length). This Pseudomonas syringae pv. tomato (strain ATCC BAA-871 / DC3000) protein is Acyl-homoserine lactone acylase PvdQ (pvdQ).